We begin with the raw amino-acid sequence, 458 residues long: Ribulose bisphosphate carboxylase (458 aa).

Residue N111 participates in substrate binding. Catalysis depends on K166, which acts as the Proton acceptor. Residue K168 coordinates substrate. K191, D193, and E194 together coordinate Mg(2+). K191 is modified (N6-carboxylysine). H287 functions as the Proton acceptor in the catalytic mechanism. Residues R288, H321, and S368 each contribute to the substrate site.

This sequence belongs to the RuBisCO large chain family. Type II subfamily. As to quaternary structure, homodimer. Requires Mg(2+) as cofactor.

The enzyme catalyses 2 (2R)-3-phosphoglycerate + 2 H(+) = D-ribulose 1,5-bisphosphate + CO2 + H2O. The catalysed reaction is D-ribulose 1,5-bisphosphate + O2 = 2-phosphoglycolate + (2R)-3-phosphoglycerate + 2 H(+). RuBisCO catalyzes two reactions: the carboxylation of D-ribulose 1,5-bisphosphate, the primary event in carbon dioxide fixation, as well as the oxidative fragmentation of the pentose substrate. Both reactions occur simultaneously and in competition at the same active site. In Rhodobacter capsulatus (Rhodopseudomonas capsulata), this protein is Ribulose bisphosphate carboxylase (cbbM).